The primary structure comprises 143 residues: Late embryogenesis abundant protein 1 (143 aa).

Over residues 1–17 (MSSQQNQNRQGEQQEQG) the composition is skewed to low complexity. Residues 1 to 143 (MSSQQNQNRQ…QAGEKVKGRD (143 aa)) form a disordered region. Tandem repeats lie at residues 47–57 (KTAEFRDSAGE), 69–79 (KGQEFKERAGE), 80–90 (KAEETKQRAGE), and 91–101 (KMDETKQRAGE). 2 stretches are compositionally biased toward basic and acidic residues: residues 47 to 60 (KTAE…ETIR) and 69 to 143 (KGQE…KGRD). The 4 X 11 AA approximate repeats stretch occupies residues 47–101 (KTAEFRDSAGETIRDLTGQAQEKGQEFKERAGEKAEETKQRAGEKMDETKQRAGE).

Belongs to the LEA type 4 family.

May be involved in defense against water stress. The protein is Late embryogenesis abundant protein 1 of Aphelenchoides avenae (Mycophagous nematode worm).